A 195-amino-acid polypeptide reads, in one-letter code: Probable chemoreceptor glutamine deamidase CheD 2 (195 aa).

It belongs to the CheD family.

The catalysed reaction is L-glutaminyl-[protein] + H2O = L-glutamyl-[protein] + NH4(+). Probably deamidates glutamine residues to glutamate on methyl-accepting chemotaxis receptors (MCPs), playing an important role in chemotaxis. The chain is Probable chemoreceptor glutamine deamidase CheD 2 from Burkholderia thailandensis (strain ATCC 700388 / DSM 13276 / CCUG 48851 / CIP 106301 / E264).